A 238-amino-acid polypeptide reads, in one-letter code: Histone deacetylase 7 (238 aa).

Disordered stretches follow at residues 1 to 26 (TPGSQPQPMDLRVGQRPTVEPPPEPA) and 47 to 72 (QQQRSAEPMRLSMDPPLPELQGGQQE). The segment at 58–158 (SMDPPLPELQ…LPTEPPEHFP (101 aa)) is interaction with MEF2A. Phosphoserine is present on residues serine 118 and serine 164. The tract at residues 145-238 (PVPSLPTEPP…NPALGSEADG (94 aa)) is disordered. Basic and acidic residues predominate over residues 176-190 (KSLERRKNPLLRKES). Phosphoserine; by PKD/PRKD2 is present on serine 190. Residues 206 to 221 (SSPSSSSTPASGCSSP) are compositionally biased toward low complexity.

Belongs to the histone deacetylase family. HD type 2 subfamily. In terms of assembly, interacts with HDAC1, HDAC2, HDAC3, HDAC4, HDAC5, NCOR1, NCOR2, SIN3A, SIN3B, RBBP4, RBBP7, MTA1L1, SAP30 and MBD3. Interacts with KAT5 and EDNRA. Interacts with the 14-3-3 protein YWHAE, MEF2A, MEF2B and MEF2C. Interacts with ZMYND15. Interacts with KDM5B. Interacts with PML. Interacts with FOXP3. Interacts with RARA. May be phosphorylated by CaMK1. Phosphorylated by the PKC kinases PKN1 and PKN2, impairing nuclear import. Phosphorylation at Ser-164 by MARK2, MARK3 and PRKD1 promotes interaction with 14-3-3 proteins and export from the nucleus. Phosphorylation at Ser-164 is a prerequisite for phosphorylation at Ser-190.

Its subcellular location is the nucleus. The protein localises to the cytoplasm. It catalyses the reaction N(6)-acetyl-L-lysyl-[histone] + H2O = L-lysyl-[histone] + acetate. The enzyme catalyses N(6)-acetyl-L-lysyl-[protein] + H2O = L-lysyl-[protein] + acetate. Responsible for the deacetylation of lysine residues on the N-terminal part of the core histones (H2A, H2B, H3 and H4). Histone deacetylation gives a tag for epigenetic repression and plays an important role in transcriptional regulation, cell cycle progression and developmental events. Histone deacetylases act via the formation of large multiprotein complexes. Involved in muscle maturation by repressing transcription of myocyte enhancer factors such as MEF2A, MEF2B and MEF2C. During muscle differentiation, it shuttles into the cytoplasm, allowing the expression of myocyte enhancer factors. May be involved in Epstein-Barr virus (EBV) latency, possibly by repressing the viral BZLF1 gene. Positively regulates the transcriptional repressor activity of FOXP3. Serves as a corepressor of RARA, causing its deacetylation and inhibition of RARE DNA element binding. In association with RARA, plays a role in the repression of microRNA-10a and thereby in the inflammatory response. Also acetylates non-histone proteins, such as ALKBH5. The polypeptide is Histone deacetylase 7 (Hdac7) (Rattus norvegicus (Rat)).